Here is a 196-residue protein sequence, read N- to C-terminus: Recombination protein RecR (196 aa).

A C4-type zinc finger spans residues Cys57–Cys72. The 96-residue stretch at Thr80–Pro175 folds into the Toprim domain.

The protein belongs to the RecR family.

Functionally, may play a role in DNA repair. It seems to be involved in an RecBC-independent recombinational process of DNA repair. It may act with RecF and RecO. The sequence is that of Recombination protein RecR from Acidovorax sp. (strain JS42).